Consider the following 180-residue polypeptide: ADP-ribosylation factor 4 (180 aa).

The N-myristoyl glycine moiety is linked to residue G2. GTP is bound by residues 24–31 (GLDAAGKT), 67–71 (DVGGQ), and 126–129 (NKQD). Phosphoserine is present on S147.

Belongs to the small GTPase superfamily. Arf family. As to quaternary structure, forms a complex containing RAB11A, ASAP1, RAB3IP, RAP11FIP3 and ARF4; the complex promotes preciliary trafficking; the complex binds to RHO in photoreceptor cells and promotes RHO ciliary transport.

It localises to the golgi apparatus. It is found in the membrane. Functionally, GTP-binding protein that functions as an allosteric activator of the cholera toxin catalytic subunit, an ADP-ribosyltransferase. Involved in protein trafficking; may modulate vesicle budding and uncoating within the Golgi apparatus. Part of the ciliary targeting complex containing Rab11, ASAP1, Rabin8/RAB3IP, RAB11FIP3 and ARF4, which direct preciliary vesicle trafficking to mother centriole and ciliogenesis initiation. The polypeptide is ADP-ribosylation factor 4 (ARF4) (Bos taurus (Bovine)).